The primary structure comprises 192 residues: Large ribosomal subunit protein bL9 (192 aa).

Positions 173-192 (ALRPEDFFDPEADGLDENEA) are disordered. The segment covering 179-192 (FFDPEADGLDENEA) has biased composition (acidic residues).

It belongs to the bacterial ribosomal protein bL9 family.

Its function is as follows. Binds to the 23S rRNA. The sequence is that of Large ribosomal subunit protein bL9 from Rhizobium etli (strain ATCC 51251 / DSM 11541 / JCM 21823 / NBRC 15573 / CFN 42).